A 135-amino-acid polypeptide reads, in one-letter code: uncharacterized protein (135 aa).

The next 2 helical transmembrane spans lie at I11–I31 and L57–I77.

Its subcellular location is the cell membrane. This is an uncharacterized protein from Methanocaldococcus jannaschii (strain ATCC 43067 / DSM 2661 / JAL-1 / JCM 10045 / NBRC 100440) (Methanococcus jannaschii).